The following is a 254-amino-acid chain: Probable transcriptional regulatory protein HDEF_0869 (254 aa).

Residues 1 to 20 (MAGHSKWANTKHRKAAQDAK) are disordered.

The protein belongs to the TACO1 family.

The protein resides in the cytoplasm. The chain is Probable transcriptional regulatory protein HDEF_0869 from Hamiltonella defensa subsp. Acyrthosiphon pisum (strain 5AT).